Reading from the N-terminus, the 116-residue chain is Small ribosomal subunit protein bS16 (116 aa).

The protein belongs to the bacterial ribosomal protein bS16 family.

In Chlamydia muridarum (strain MoPn / Nigg), this protein is Small ribosomal subunit protein bS16.